A 768-amino-acid chain; its full sequence is Probable beta-glucosidase M (768 aa).

The N-terminal stretch at 1–19 is a signal peptide; the sequence is MHAIAGLTGFLAGVSLSYA. Residues Asn-25, Asn-72, and Asn-259 are each glycosylated (N-linked (GlcNAc...) asparagine). Asp-287 is a catalytic residue. 7 N-linked (GlcNAc...) asparagine glycosylation sites follow: Asn-315, Asn-322, Asn-394, Asn-434, Asn-472, Asn-543, and Asn-651.

It belongs to the glycosyl hydrolase 3 family.

The protein resides in the secreted. It carries out the reaction Hydrolysis of terminal, non-reducing beta-D-glucosyl residues with release of beta-D-glucose.. It functions in the pathway glycan metabolism; cellulose degradation. Beta-glucosidases are one of a number of cellulolytic enzymes involved in the degradation of cellulosic biomass. Catalyzes the last step releasing glucose from the inhibitory cellobiose. In Aspergillus flavus (strain ATCC 200026 / FGSC A1120 / IAM 13836 / NRRL 3357 / JCM 12722 / SRRC 167), this protein is Probable beta-glucosidase M (bglM).